We begin with the raw amino-acid sequence, 580 residues long: Acyl-coenzyme A synthetase ACSM4, mitochondrial (580 aa).

The N-terminal 22 residues, 1–22 (MKVLLHCQRLRFIWLAKPAGRH), are a transit peptide targeting the mitochondrion. ATP is bound by residues 229 to 237 (TSGTTGSPK), 368 to 373 (EGYGQT), D455, R470, and K566.

The protein belongs to the ATP-dependent AMP-binding enzyme family. Mg(2+) is required as a cofactor. The cofactor is Mn(2+).

It is found in the mitochondrion. The enzyme catalyses a medium-chain fatty acid + ATP + CoA = a medium-chain fatty acyl-CoA + AMP + diphosphate. The catalysed reaction is hexanoate + ATP + CoA = hexanoyl-CoA + AMP + diphosphate. It carries out the reaction octanoate + ATP + CoA = octanoyl-CoA + AMP + diphosphate. It catalyses the reaction decanoate + ATP + CoA = decanoyl-CoA + AMP + diphosphate. The enzyme catalyses dodecanoate + ATP + CoA = dodecanoyl-CoA + AMP + diphosphate. Catalyzes the activation of fatty acids by CoA to produce an acyl-CoA, the first step in fatty acid metabolism. Capable of activating medium-chain fatty acids with a preference for C6-12 fatty acids. The sequence is that of Acyl-coenzyme A synthetase ACSM4, mitochondrial (Acsm4) from Mus musculus (Mouse).